The sequence spans 291 residues: MGVVVVSVVTLLDQRNALPRTSADASPALWSFLLRQCRILASEPLGTPVVVRPANLRRLAEPLMDLPKFTRPIVRTRSCRCPPNTTTGLFAEDDPLESIEILDAPACFRLLHQERPGPHRLYHLWVVGAADLCVPFFEYAQKTRLGFRFIATKTNDAWVGEPWPLPDRFLPERTVSWTPFPAAPNHPLENLLSRYEYQYGVVVPGDRERSCLRWLRSLVAPHNKPRPASSRPHPATHPTQRPCFTCMGRPEIPDEPSWQTGDDDPQNPGPPLAVGDEWPPSSHVCYPITNL.

The residue at position 2 (glycine 2) is an N-acetylglycine; by host. Positions 223–281 (NKPRPASSRPHPATHPTQRPCFTCMGRPEIPDEPSWQTGDDDPQNPGPPLAVGDEWPPS) are disordered.

This sequence belongs to the herpesviridae HHV-1 US2 protein family. In terms of assembly, interacts with host KRT18. Interacts with host MAP3K7; this interaction induces host NF-kappa-B pathway.

Its subcellular location is the virion. The protein localises to the host cytoplasm. It localises to the host cell surface. It is found in the host nucleus. Functionally, plays a role in the activation of the host NF-kappa-B pathway by interacting with and thus activating the component MAP3K7. The sequence is that of Protein US2 from Human herpesvirus 2 (strain HG52) (HHV-2).